Here is a 371-residue protein sequence, read N- to C-terminus: Cytochrome b (371 aa).

Transmembrane regions (helical) follow at residues 24 to 44 (FGSM…FLAL), 68 to 89 (WTMQ…YIHI), 104 to 124 (WLSG…GYVL), and 169 to 189 (FFAL…VHIV). Positions 74 and 88 each coordinate heme b. The heme b site is built by His173 and His187. His192 is an a ubiquinone binding site. 4 helical membrane passes run 217 to 237 (YKDT…MSFA), 279 to 299 (LGGT…PFTH), 311 to 331 (LSQL…WTAT), and 338 to 357 (FITI…MTNP).

This sequence belongs to the cytochrome b family. As to quaternary structure, the cytochrome bc1 complex contains 3 respiratory subunits (MT-CYB, CYC1 and UQCRFS1), 2 core proteins (UQCRC1 and UQCRC2) and probably 6 low-molecular weight proteins. Heme b is required as a cofactor.

The protein localises to the mitochondrion inner membrane. Functionally, component of the ubiquinol-cytochrome c reductase complex (complex III or cytochrome b-c1 complex) that is part of the mitochondrial respiratory chain. The b-c1 complex mediates electron transfer from ubiquinol to cytochrome c. Contributes to the generation of a proton gradient across the mitochondrial membrane that is then used for ATP synthesis. This chain is Cytochrome b (MT-CYB), found in Homoroselaps lacteus (Spotted harlequin snake).